The chain runs to 132 residues: Small ribosomal subunit protein uS8 (132 aa).

It belongs to the universal ribosomal protein uS8 family. As to quaternary structure, part of the 30S ribosomal subunit. Contacts proteins S5 and S12.

In terms of biological role, one of the primary rRNA binding proteins, it binds directly to 16S rRNA central domain where it helps coordinate assembly of the platform of the 30S subunit. In Geobacter metallireducens (strain ATCC 53774 / DSM 7210 / GS-15), this protein is Small ribosomal subunit protein uS8.